Reading from the N-terminus, the 216-residue chain is UDP-N-acetylglucosamine transferase subunit ALG14 (216 aa).

At 1-3 the chain is on the lumenal side; sequence MVC. The helical transmembrane segment at 4–24 threads the bilayer; the sequence is VLVLAAAAGAVAVFLILRIWV. Topologically, residues 25 to 216 are cytoplasmic; that stretch reads VLRSMDVTPR…PKSVYLGRIV (192 aa).

It belongs to the ALG14 family. In terms of assembly, forms with ALG13 the active heterodimeric UDP-N-acetylglucosamine transferase complex.

It localises to the endoplasmic reticulum membrane. Functionally, part of the UDP-N-acetylglucosamine transferase complex that operates in the biosynthetic pathway of dolichol-linked oligosaccharides, the glycan precursors employed in protein asparagine (N)-glycosylation. The assembly of dolichol-linked oligosaccharides begins on the cytosolic side of the endoplasmic reticulum membrane and finishes in its lumen. The sequential addition of sugars to dolichol pyrophosphate produces dolichol-linked oligosaccharides containing fourteen sugars, including two GlcNAcs, nine mannoses and three glucoses. Once assembled, the oligosaccharides are transferred from the lipid to nascent proteins by oligosaccharyltransferases. Functions as a protein-membrane adapter recruiting ALG13 at the cytoplasmic face of the endoplasmic reticulum, where the complex catalyzes the second step of dolichol pyrophosphate biosynthesis, transferring a beta1,4-linked N-acetylglucosamine (GlcNAc) from UDP-GlcNAc to GlcNAc-pyrophosphatedolichol (Gn-PDol) to produce N,N'-diacetylchitobiosyl diphosphodolichol. N,N'-diacetylchitobiosyl diphosphodolichol is a substrate for ALG1, the following enzyme in the biosynthetic pathway. The chain is UDP-N-acetylglucosamine transferase subunit ALG14 from Homo sapiens (Human).